We begin with the raw amino-acid sequence, 526 residues long: CTP synthase (526 aa).

Residues 1–264 (MPQRFIVVTG…HKLIAKELDI (264 aa)) are amidoligase domain. Ser-14 serves as a coordination point for CTP. Ser-14 serves as a coordination point for UTP. ATP is bound by residues 15–20 (GIGKGI) and Asp-72. Residues Asp-72 and Glu-138 each coordinate Mg(2+). CTP-binding positions include 145–147 (DIE), 185–190 (KTKPTQ), and Lys-221. UTP is bound by residues 185 to 190 (KTKPTQ) and Lys-221. One can recognise a Glutamine amidotransferase type-1 domain in the interval 282 to 526 (KIGIVGKYLG…VKAAGGKIND (245 aa)). Gly-342 is an L-glutamine binding site. Cys-369 acts as the Nucleophile; for glutamine hydrolysis in catalysis. L-glutamine-binding positions include 370–373 (LGMQ), Glu-393, and Arg-451. Catalysis depends on residues His-499 and Glu-501.

Belongs to the CTP synthase family. Homotetramer.

It catalyses the reaction UTP + L-glutamine + ATP + H2O = CTP + L-glutamate + ADP + phosphate + 2 H(+). The catalysed reaction is L-glutamine + H2O = L-glutamate + NH4(+). The enzyme catalyses UTP + NH4(+) + ATP = CTP + ADP + phosphate + 2 H(+). It functions in the pathway pyrimidine metabolism; CTP biosynthesis via de novo pathway; CTP from UDP: step 2/2. With respect to regulation, allosterically activated by GTP, when glutamine is the substrate; GTP has no effect on the reaction when ammonia is the substrate. The allosteric effector GTP functions by stabilizing the protein conformation that binds the tetrahedral intermediate(s) formed during glutamine hydrolysis. Inhibited by the product CTP, via allosteric rather than competitive inhibition. Functionally, catalyzes the ATP-dependent amination of UTP to CTP with either L-glutamine or ammonia as the source of nitrogen. Regulates intracellular CTP levels through interactions with the four ribonucleotide triphosphates. In Thermosipho africanus (strain TCF52B), this protein is CTP synthase.